Here is a 90-residue protein sequence, read N- to C-terminus: Small ribosomal subunit protein uS15 (90 aa).

Belongs to the universal ribosomal protein uS15 family. As to quaternary structure, part of the 30S ribosomal subunit. Forms a bridge to the 50S subunit in the 70S ribosome, contacting the 23S rRNA.

Functionally, one of the primary rRNA binding proteins, it binds directly to 16S rRNA where it helps nucleate assembly of the platform of the 30S subunit by binding and bridging several RNA helices of the 16S rRNA. Forms an intersubunit bridge (bridge B4) with the 23S rRNA of the 50S subunit in the ribosome. The chain is Small ribosomal subunit protein uS15 from Helicobacter acinonychis (strain Sheeba).